The primary structure comprises 157 residues: ATP synthase subunit b (157 aa).

The chain crosses the membrane as a helical span at residues 7–29; it reads MFGQLIMFTMFTWFCMKFVWPPI.

Belongs to the ATPase B chain family. In terms of assembly, F-type ATPases have 2 components, F(1) - the catalytic core - and F(0) - the membrane proton channel. F(1) has five subunits: alpha(3), beta(3), gamma(1), delta(1), epsilon(1). F(0) has three main subunits: a(1), b(2) and c(10-14). The alpha and beta chains form an alternating ring which encloses part of the gamma chain. F(1) is attached to F(0) by a central stalk formed by the gamma and epsilon chains, while a peripheral stalk is formed by the delta and b chains.

Its subcellular location is the cell inner membrane. F(1)F(0) ATP synthase produces ATP from ADP in the presence of a proton or sodium gradient. F-type ATPases consist of two structural domains, F(1) containing the extramembraneous catalytic core and F(0) containing the membrane proton channel, linked together by a central stalk and a peripheral stalk. During catalysis, ATP synthesis in the catalytic domain of F(1) is coupled via a rotary mechanism of the central stalk subunits to proton translocation. Functionally, component of the F(0) channel, it forms part of the peripheral stalk, linking F(1) to F(0). The sequence is that of ATP synthase subunit b from Ruthia magnifica subsp. Calyptogena magnifica.